We begin with the raw amino-acid sequence, 345 residues long: Dihydroorotate dehydrogenase (quinone) (345 aa).

FMN-binding positions include 65–69 and threonine 89; that span reads AGLDK. Lysine 69 is a substrate binding site. 114–118 serves as a coordination point for substrate; sequence NRMGF. FMN-binding residues include asparagine 142 and asparagine 175. Residue asparagine 175 coordinates substrate. Serine 178 serves as the catalytic Nucleophile. Position 180 (asparagine 180) interacts with substrate. Positions 220 and 248 each coordinate FMN. 249–250 serves as a coordination point for substrate; that stretch reads NT. FMN-binding positions include glycine 271, glycine 300, and 321-322; that span reads YT.

It belongs to the dihydroorotate dehydrogenase family. Type 2 subfamily. As to quaternary structure, monomer. It depends on FMN as a cofactor.

It is found in the cell membrane. The enzyme catalyses (S)-dihydroorotate + a quinone = orotate + a quinol. It functions in the pathway pyrimidine metabolism; UMP biosynthesis via de novo pathway; orotate from (S)-dihydroorotate (quinone route): step 1/1. Catalyzes the conversion of dihydroorotate to orotate with quinone as electron acceptor. In Burkholderia cenocepacia (strain HI2424), this protein is Dihydroorotate dehydrogenase (quinone).